We begin with the raw amino-acid sequence, 589 residues long: V-type ATP synthase alpha chain 1 (589 aa).

Gly-239–Thr-246 is a binding site for ATP.

This sequence belongs to the ATPase alpha/beta chains family.

It catalyses the reaction ATP + H2O + 4 H(+)(in) = ADP + phosphate + 5 H(+)(out). Its function is as follows. Produces ATP from ADP in the presence of a proton gradient across the membrane. The V-type alpha chain is a catalytic subunit. The protein is V-type ATP synthase alpha chain 1 (atpA1) of Treponema pallidum (strain Nichols).